A 453-amino-acid polypeptide reads, in one-letter code: 4,4'-diapolycopene-4,4'-dial dehydrogenase (453 aa).

Over residues 1–20 the composition is skewed to basic and acidic residues; sequence MPDNDSHSLKSLPERQREDL. Residues 1-23 form a disordered region; sequence MPDNDSHSLKSLPERQREDLFSA. Active-site residues include Glu215 and Cys249.

Belongs to the aldehyde dehydrogenase family.

The catalysed reaction is all-trans-4,4'-diapolycopene-4,4'-dial + 2 A + 2 H2O = all-trans-4,4'-diapolycopene-4,4'-dioate + 2 AH2 + 2 H(+). Its pathway is carotenoid biosynthesis. Involved in the biosynthesis of the major C30 carotenoid 4,4'-diapolycopene-4,4'-dioic acid, which protects B.firmus from peroxidative reactions. Catalyzes the oxidation of 4,4'-diapolycopene-4,4'-dial to yield 4,4'-diapolycopene-4,4'-dioic aci. In Cytobacillus firmus (Bacillus firmus), this protein is 4,4'-diapolycopene-4,4'-dial dehydrogenase.